The primary structure comprises 156 residues: Large ribosomal subunit protein uL15 (156 aa).

Positions 1–11 are enriched in basic and acidic residues; it reads MKLNDLRDKPG. Positions 1-40 are disordered; the sequence is MKLNDLRDKPGSVKARKRVGRGIGSGTGKTGGRGVKGQKS. Over residues 21-35 the composition is skewed to gly residues; that stretch reads RGIGSGTGKTGGRGV.

The protein belongs to the universal ribosomal protein uL15 family. In terms of assembly, part of the 50S ribosomal subunit.

Functionally, binds to the 23S rRNA. This Brucella anthropi (strain ATCC 49188 / DSM 6882 / CCUG 24695 / JCM 21032 / LMG 3331 / NBRC 15819 / NCTC 12168 / Alc 37) (Ochrobactrum anthropi) protein is Large ribosomal subunit protein uL15.